The sequence spans 372 residues: Mitogen-activated protein kinase kinase kinase 17 (372 aa).

Residues 3–259 form the Protein kinase domain; that stretch reads WTRGRILGRG…ATQLLNHPFL (257 aa). ATP is bound by residues 9-17 and lysine 32; that span reads LGRGSTATV. Aspartate 126 functions as the Proton acceptor in the catalytic mechanism. Serine 312 carries the phosphoserine modification.

It belongs to the protein kinase superfamily. Ser/Thr protein kinase family. In terms of assembly, binds to MKK3.

It localises to the nucleus. It carries out the reaction L-seryl-[protein] + ATP = O-phospho-L-seryl-[protein] + ADP + H(+). The catalysed reaction is L-threonyl-[protein] + ATP = O-phospho-L-threonyl-[protein] + ADP + H(+). Functionally, component of the abscisic acid (ABA) signaling pathway that may act as ABA signal transducer in the context of abiotic stresses. Triggers MPK7 activation in a MKK3-dependent manner. Mediates the ABA-dependent activation of the MKK3-MPK7 module. This is Mitogen-activated protein kinase kinase kinase 17 from Arabidopsis thaliana (Mouse-ear cress).